The chain runs to 288 residues: Programmed cell death protein 1 (288 aa).

The signal sequence occupies residues 1–24; sequence MQIPQAPWPVVWAVLQLGWRPGWF. The segment at 25-34 is nivolumab binding; the sequence is LDSPDRPWNP. The Extracellular segment spans residues 25–170; that stretch reads LDSPDRPWNP…RPAGQFQTLV (146 aa). The Ig-like V-type domain maps to 35 to 145; the sequence is PTFSPALLVV…ESLRAELRVT (111 aa). N-linked (GlcNAc...) asparagine glycosylation is found at Asn49, Asn58, Asn74, and Asn116. Cys54 and Cys123 are joined by a disulfide. Positions 70 to 77 are interaction with CD274/PDCD1L1; that stretch reads MSPSNQTD. Residues 74–99 form a pembrolizumab binding region; sequence NQTDKLAAFPEDRSQPGQDCRFRVTQ. The chain crosses the membrane as a helical span at residues 171–191; it reads VGVVGGLLGSLVLLVWVLAVI. The Cytoplasmic segment spans residues 192-288; the sequence is CSRAARGTIG…PEDGHCSWPL (97 aa). The short motif at 221-226 is the ITIM motif element; sequence VDYGEL. Tyr223 carries the post-translational modification Phosphotyrosine. Lys233 is covalently cross-linked (Glycyl lysine isopeptide (Lys-Gly) (interchain with G-Cter in ubiquitin)). Thr234 bears the Phosphothreonine; by MAPK3 mark. Positions 247–251 match the ITSM motif motif; the sequence is EYATI. Tyr248 is modified (phosphotyrosine). Residues 254-288 form a disordered region; sequence PSGMGTSSPARRGSADGPRSAQPLRPEDGHCSWPL. The segment covering 278–288 has biased composition (basic and acidic residues); the sequence is RPEDGHCSWPL.

As to quaternary structure, monomer. Interacts with CD274/PDCD1L1. Interacts with CD273/PDCD1LG2. Interacts with FBXO38; leading to ubiquitination and degradation of PDCD1 by the proteasome. Post-translationally, ubiquitinated at Lys-233 by the SCF(FBXO38) complex, leading to its proteasomal degradation. Ubiquitinated via 'Lys-48'-linked polyubiquitin chains. Deubiquitinated and thus stabilized by USP5. Tyrosine phosphorylated at Tyr-223 (within ITIM motif) and Tyr-248 (ITSM motif) upon ligand binding. Phosphorylation at Tyr-248 promotes the recruitment of the protein tyrosine phosphatase PTPN11/SHP-2 that mediates dephosphorylation of key TCR proximal signaling molecules, such as ZAP70, PRKCQ/PKCtheta and CD247/CD3zeta. Phosphorylation at Thr-234 promotes the recruitment of the deubiquitinase USP5. In terms of processing, N-glycosylation at Asn-58 contains at least two N-acetylglucosamine units and one fucose. N-glycosylation does not affect binding to nivolumab drug.

Its subcellular location is the cell membrane. Its activity is regulated as follows. Inhibited by pembrolizumab (also named MK-3475 or lambrolizumab), a monoclonal antibody that prevents the interaction with CD274/PDCD1L1. Inhibited by nivolumab (also named ONO-4538, BMS-936558 or Opdivo), a monoclonal antibody that prevents the interaction with CD274/PDCD1L1. The interaction with nivolumab is not dependent on glycosylation and depends on a loop at the N-terminus (N-terminal loop, corresponding to residues 25-34). Targeting the interaction between PDCD1 and CD274/PDCD1L1 with pembrolizumab and nivolumab antibodies has demonstrated great promise as a strategy for controlling and eradicating cancer. Pembrolizumab and nivolumab are used for treatment of patients with advanced melanoma. These antibodies are also effective against other cancers, such as non-small cell lung cancer, renal cell carcinoma, bladder cancer and Hodgkin's lymphoma. In terms of biological role, inhibitory receptor on antigen activated T-cells that plays a critical role in induction and maintenance of immune tolerance to self. Delivers inhibitory signals upon binding to ligands CD274/PDCD1L1 and CD273/PDCD1LG2. Following T-cell receptor (TCR) engagement, PDCD1 associates with CD3-TCR in the immunological synapse and directly inhibits T-cell activation. Suppresses T-cell activation through the recruitment of PTPN11/SHP-2: following ligand-binding, PDCD1 is phosphorylated within the ITSM motif, leading to the recruitment of the protein tyrosine phosphatase PTPN11/SHP-2 that mediates dephosphorylation of key TCR proximal signaling molecules, such as ZAP70, PRKCQ/PKCtheta and CD247/CD3zeta. Its function is as follows. The PDCD1-mediated inhibitory pathway is exploited by tumors to attenuate anti-tumor immunity and escape destruction by the immune system, thereby facilitating tumor survival. The interaction with CD274/PDCD1L1 inhibits cytotoxic T lymphocytes (CTLs) effector function. The blockage of the PDCD1-mediated pathway results in the reversal of the exhausted T-cell phenotype and the normalization of the anti-tumor response, providing a rationale for cancer immunotherapy. The sequence is that of Programmed cell death protein 1 from Homo sapiens (Human).